A 327-amino-acid polypeptide reads, in one-letter code: D-alanine--D-alanine ligase (327 aa).

The 200-residue stretch at 113–312 (KRLWMTHGLA…YEDFVLQVLA (200 aa)) folds into the ATP-grasp domain. 139–194 (VADLGLPLIVKPAREGSSIGLTKVTAADQMRAAFDKAAALDNDVIAETFVDGAELT) is a binding site for ATP. 3 residues coordinate Mg(2+): Asp-266, Glu-279, and Asn-281.

It belongs to the D-alanine--D-alanine ligase family. Mg(2+) is required as a cofactor. Mn(2+) serves as cofactor.

The protein resides in the cytoplasm. The enzyme catalyses 2 D-alanine + ATP = D-alanyl-D-alanine + ADP + phosphate + H(+). Its pathway is cell wall biogenesis; peptidoglycan biosynthesis. Functionally, cell wall formation. The polypeptide is D-alanine--D-alanine ligase (Cupriavidus taiwanensis (strain DSM 17343 / BCRC 17206 / CCUG 44338 / CIP 107171 / LMG 19424 / R1) (Ralstonia taiwanensis (strain LMG 19424))).